A 467-amino-acid chain; its full sequence is UDP-N-acetylmuramate--L-alanine ligase (467 aa).

An ATP-binding site is contributed by 114 to 120 (GTHGKTT).

Belongs to the MurCDEF family.

The protein localises to the cytoplasm. It carries out the reaction UDP-N-acetyl-alpha-D-muramate + L-alanine + ATP = UDP-N-acetyl-alpha-D-muramoyl-L-alanine + ADP + phosphate + H(+). It participates in cell wall biogenesis; peptidoglycan biosynthesis. Cell wall formation. The protein is UDP-N-acetylmuramate--L-alanine ligase of Rhodopseudomonas palustris (strain BisB5).